Here is a 317-residue protein sequence, read N- to C-terminus: Probable cell division protein WhiA (317 aa).

The H-T-H motif DNA-binding region spans 275-308 (SLKELGEMLVPKVGKSGVNHRMRKIDELAEKLEE).

This sequence belongs to the WhiA family.

Functionally, involved in cell division and chromosome segregation. The sequence is that of Probable cell division protein WhiA from Desulfitobacterium hafniense (strain DSM 10664 / DCB-2).